The primary structure comprises 248 residues: MSLFRDDGIVLRTQKLGEADRIITLLTRGHGRVRAVARGVRRTKSKFGARLEPFSHVDVQFFSRGSELIGRGLPLCTQSETIAPYGGAIVTDYARYTAGTAMLETAERFTDHEGEPAVQQYLLLVGGLRTLARGEHEPHLVLDAFLLRSLAVNGYAPSFSNCAKCGMPGPNRFFSVAAGGSVCVDCRVPGSVVPSAQALVLLGALLTGDWETADACEPRYVREGSGLVSAYLHWHLERGLRSLRYVEK.

This sequence belongs to the RecO family.

Functionally, involved in DNA repair and RecF pathway recombination. The sequence is that of DNA repair protein RecO from Streptomyces avermitilis (strain ATCC 31267 / DSM 46492 / JCM 5070 / NBRC 14893 / NCIMB 12804 / NRRL 8165 / MA-4680).